A 768-amino-acid chain; its full sequence is Eukaryotic elongation factor 2 kinase (768 aa).

Over residues 1-17 the composition is skewed to polar residues; that stretch reads MTIDTTNESDNSPTNSP. Positions 1–21 are disordered; sequence MTIDTTNESDNSPTNSPGLEA. One can recognise an Alpha-type protein kinase domain in the interval 102-309; the sequence is RYSAIRKQWT…ICETMDLSNF (208 aa). 279–284 is an ATP binding site; it reads GDGNLG. A compositionally biased stretch (acidic residues) spans 402–411; it reads SEDEEDEEED. The tract at residues 402–446 is disordered; it reads SEDEEDEEEDYPRSEKSGNSQKSRRSRMSISTRSSGDESASRPRK.

It belongs to the protein kinase superfamily. Alpha-type protein kinase family. Monomer or homodimer. Interacts with cmd-1 in the presence of Ca(2+).

It catalyses the reaction [translation elongation factor 2] + ATP = [translation elongation factor 2]-phosphate + ADP + H(+). With respect to regulation, calcium(2+)/calmodulin dependent activity. Undergoes calcium/calmodulin-dependent intramolecular autophosphorylation, and this results in it becoming partially calcium/calmodulin-independent. Functionally, phosphorylates elongation factor-2 (eEF-2) at two threonine residues that are conserved in all eukaryotes and are located within a GTP-binding domain. Calcium(2+)/calmodulin dependent activity. Inactivates eEF-2 by catalyzing its phosphorylation. eEF-2 catalyzes the movement of the ribosome along mRNA during translation in eukaryotic cells. The chain is Eukaryotic elongation factor 2 kinase (efk-1) from Caenorhabditis elegans.